The primary structure comprises 473 residues: Aspartyl/glutamyl-tRNA(Asn/Gln) amidotransferase subunit B (473 aa).

It belongs to the GatB/GatE family. GatB subfamily. In terms of assembly, heterotrimer of A, B and C subunits.

It catalyses the reaction L-glutamyl-tRNA(Gln) + L-glutamine + ATP + H2O = L-glutaminyl-tRNA(Gln) + L-glutamate + ADP + phosphate + H(+). It carries out the reaction L-aspartyl-tRNA(Asn) + L-glutamine + ATP + H2O = L-asparaginyl-tRNA(Asn) + L-glutamate + ADP + phosphate + 2 H(+). Functionally, allows the formation of correctly charged Asn-tRNA(Asn) or Gln-tRNA(Gln) through the transamidation of misacylated Asp-tRNA(Asn) or Glu-tRNA(Gln) in organisms which lack either or both of asparaginyl-tRNA or glutaminyl-tRNA synthetases. The reaction takes place in the presence of glutamine and ATP through an activated phospho-Asp-tRNA(Asn) or phospho-Glu-tRNA(Gln). This is Aspartyl/glutamyl-tRNA(Asn/Gln) amidotransferase subunit B from Francisella tularensis subsp. novicida (strain U112).